The following is a 448-amino-acid chain: Phosphoglucosamine mutase (448 aa).

Catalysis depends on Ser-100, which acts as the Phosphoserine intermediate. 4 residues coordinate Mg(2+): Ser-100, Asp-240, Asp-242, and Asp-244. Ser-100 bears the Phosphoserine mark.

Belongs to the phosphohexose mutase family. Requires Mg(2+) as cofactor. Post-translationally, activated by phosphorylation.

It catalyses the reaction alpha-D-glucosamine 1-phosphate = D-glucosamine 6-phosphate. Functionally, catalyzes the conversion of glucosamine-6-phosphate to glucosamine-1-phosphate. This chain is Phosphoglucosamine mutase, found in Geobacillus thermodenitrificans (strain NG80-2).